A 188-amino-acid chain; its full sequence is ATP synthase subunit b (188 aa).

Residues 5-25 (MLLIFMMIVMIASSAMAAEAE) traverse the membrane as a helical segment.

The protein belongs to the ATPase B chain family. F-type ATPases have 2 components, F(1) - the catalytic core - and F(0) - the membrane proton channel. F(1) has five subunits: alpha(3), beta(3), gamma(1), delta(1), epsilon(1). F(0) has three main subunits: a(1), b(2) and c(10-14). The alpha and beta chains form an alternating ring which encloses part of the gamma chain. F(1) is attached to F(0) by a central stalk formed by the gamma and epsilon chains, while a peripheral stalk is formed by the delta and b chains.

The protein resides in the cell inner membrane. In terms of biological role, f(1)F(0) ATP synthase produces ATP from ADP in the presence of a proton or sodium gradient. F-type ATPases consist of two structural domains, F(1) containing the extramembraneous catalytic core and F(0) containing the membrane proton channel, linked together by a central stalk and a peripheral stalk. During catalysis, ATP synthesis in the catalytic domain of F(1) is coupled via a rotary mechanism of the central stalk subunits to proton translocation. Functionally, component of the F(0) channel, it forms part of the peripheral stalk, linking F(1) to F(0). This is ATP synthase subunit b from Thermodesulfovibrio yellowstonii (strain ATCC 51303 / DSM 11347 / YP87).